A 270-amino-acid polypeptide reads, in one-letter code: Phosphatidylglycerol--prolipoprotein diacylglyceryl transferase (270 aa).

A run of 4 helical transmembrane segments spans residues 19–39 (FPVY…LWLA), 56–76 (LVLI…VIFE), 92–112 (QGGL…ILFA), and 116–136 (GVSF…GQAI). An a 1,2-diacyl-sn-glycero-3-phospho-(1'-sn-glycerol)-binding site is contributed by Arg138. The next 3 membrane-spanning stretches (helical) occupy residues 178–198 (HPTF…LLAL), 206–226 (GELF…VEGL), and 236–256 (LRIA…FIIV).

Belongs to the Lgt family.

It is found in the cell membrane. It carries out the reaction L-cysteinyl-[prolipoprotein] + a 1,2-diacyl-sn-glycero-3-phospho-(1'-sn-glycerol) = an S-1,2-diacyl-sn-glyceryl-L-cysteinyl-[prolipoprotein] + sn-glycerol 1-phosphate + H(+). The protein operates within protein modification; lipoprotein biosynthesis (diacylglyceryl transfer). Catalyzes the transfer of the diacylglyceryl group from phosphatidylglycerol to the sulfhydryl group of the N-terminal cysteine of a prolipoprotein, the first step in the formation of mature lipoproteins. The polypeptide is Phosphatidylglycerol--prolipoprotein diacylglyceryl transferase (Bacillus anthracis (strain A0248)).